The sequence spans 232 residues: Ubiquinone biosynthesis O-methyltransferase (232 aa).

S-adenosyl-L-methionine contacts are provided by R36, G55, D76, and M120.

The protein belongs to the methyltransferase superfamily. UbiG/COQ3 family.

The enzyme catalyses a 3-demethylubiquinol + S-adenosyl-L-methionine = a ubiquinol + S-adenosyl-L-homocysteine + H(+). The catalysed reaction is a 3-(all-trans-polyprenyl)benzene-1,2-diol + S-adenosyl-L-methionine = a 2-methoxy-6-(all-trans-polyprenyl)phenol + S-adenosyl-L-homocysteine + H(+). Its pathway is cofactor biosynthesis; ubiquinone biosynthesis. Functionally, O-methyltransferase that catalyzes the 2 O-methylation steps in the ubiquinone biosynthetic pathway. This Paraburkholderia phymatum (strain DSM 17167 / CIP 108236 / LMG 21445 / STM815) (Burkholderia phymatum) protein is Ubiquinone biosynthesis O-methyltransferase.